Reading from the N-terminus, the 188-residue chain is C-type lectin domain family 5 member A (188 aa).

Over 1–4 the chain is Cytoplasmic; the sequence is MNWH. Residues 5–27 traverse the membrane as a helical; Signal-anchor for type II membrane protein segment; the sequence is MIISGLIVVVLKVVGMTLFLLYF. Residues 28-188 lie on the Extracellular side of the membrane; that stretch reads PQIFNKSNDG…YRRICEKNAK (161 aa). The N-linked (GlcNAc...) asparagine glycan is linked to N32. C71 and C82 are oxidised to a cystine. One can recognise a C-type lectin domain in the interval 78 to 184; sequence YQARCFFLST…CDISYRRICE (107 aa). N-linked (GlcNAc...) asparagine glycosylation is found at N93, N144, and N151. 2 disulfide bridges follow: C99–C183 and C161–C175.

Monomer. Homodimer. The majority of CLEC5A is expressed as a monomeric form on macrophages. Interacts with TYROBP/DAP12. The interaction with TYROBP is required for CLEC5A cell surface expression. Interacts with HCST/DAP10. Forms a CLEC5A/TYROBP/HCST trimolecular complex depending almost solely on TYROBP. As to quaternary structure, (Microbial infection) Interacts with dengue virus envelope protein E. In terms of processing, N-glycosylated. Contains sialic acid residues. As to expression, highly expressed in bone marrow with lower levels in synovium, lung and bronchus. Expressed in peripheral blood monocytes and in the monocyte/macrophage cell lines U-937 and Mono-Mac-6, but not in cell lines of other origins. Expression is down-regulated when monocytes differentiate into dendritic cells.

It localises to the cell membrane. In terms of biological role, functions as a positive regulator of osteoclastogenesis. Cell surface receptor that signals via TYROBP. Regulates inflammatory responses. (Microbial infection) Critical macrophage receptor for dengue virus serotypes 1-4. The binding of dengue virus to CLEC5A triggers signaling through the phosphorylation of TYROBP. This interaction does not result in viral entry, but stimulates pro-inflammatory cytokine release. The sequence is that of C-type lectin domain family 5 member A (CLEC5A) from Homo sapiens (Human).